The following is a 128-amino-acid chain: Fluoride-specific ion channel FluC (128 aa).

4 helical membrane-spanning segments follow: residues 5–25, 35–55, 67–87, and 96–116; these read IVAI…LSLA, LGTL…AVVF, LFVI…SVEV, and FGWA…LTAL. Na(+) contacts are provided by Gly-75 and Thr-78.

This sequence belongs to the fluoride channel Fluc/FEX (TC 1.A.43) family.

Its subcellular location is the cell inner membrane. The catalysed reaction is fluoride(in) = fluoride(out). With respect to regulation, na(+) is not transported, but it plays an essential structural role and its presence is essential for fluoride channel function. Fluoride-specific ion channel. Important for reducing fluoride concentration in the cell, thus reducing its toxicity. This is Fluoride-specific ion channel FluC from Burkholderia orbicola (strain MC0-3).